The sequence spans 632 residues: Threonine--tRNA ligase (632 aa).

The region spanning 1 to 61 (MPIVTLPDGS…EHDAEVSILT (61 aa)) is the TGS domain. The interval 242–533 (DHRKLARKLD…LIEHYAGSMP (292 aa)) is catalytic. Residues Cys333, His384, and His510 each contribute to the Zn(2+) site.

This sequence belongs to the class-II aminoacyl-tRNA synthetase family. As to quaternary structure, homodimer. Requires Zn(2+) as cofactor.

It is found in the cytoplasm. The enzyme catalyses tRNA(Thr) + L-threonine + ATP = L-threonyl-tRNA(Thr) + AMP + diphosphate + H(+). Catalyzes the attachment of threonine to tRNA(Thr) in a two-step reaction: L-threonine is first activated by ATP to form Thr-AMP and then transferred to the acceptor end of tRNA(Thr). Also edits incorrectly charged L-seryl-tRNA(Thr). This Chromohalobacter salexigens (strain ATCC BAA-138 / DSM 3043 / CIP 106854 / NCIMB 13768 / 1H11) protein is Threonine--tRNA ligase.